The following is a 1367-amino-acid chain: Mediator of RNA polymerase II transcription subunit 23 (1367 aa).

Positions 1343–1367 (PPQALNSGSPAPQSNQVPASLPVTQ) are disordered. Residues 1346-1367 (ALNSGSPAPQSNQVPASLPVTQ) show a composition bias toward polar residues.

This sequence belongs to the Mediator complex subunit 23 family. As to quaternary structure, component of the Mediator complex, which is composed of MED1, MED4, MED6, MED7, MED8, MED9, MED10, MED11, MED12, MED13, MED13L, MED14, MED15, MED16, MED17, MED18, MED19, MED20, MED21, MED22, MED23, MED24, MED25, MED26, MED27, MED29, MED30, MED31, CCNC, CDK8 and CDC2L6/CDK11. The MED12, MED13, CCNC and CDK8 subunits form a distinct module termed the CDK8 module. Mediator containing the CDK8 module is less active than Mediator lacking this module in supporting transcriptional activation. Individual preparations of the Mediator complex lacking one or more distinct subunits have been variously termed ARC, CRSP, DRIP, PC2, SMCC and TRAP. Interacts with CEBPB (when not methylated), CTNNB1, and GLI3. Interacts with CDK8 and ELK1.

The protein resides in the nucleus. Component of the Mediator complex, a coactivator involved in the regulated transcription of nearly all RNA polymerase II-dependent genes. Mediator functions as a bridge to convey information from gene-specific regulatory proteins to the basal RNA polymerase II transcription machinery. Mediator is recruited to promoters by direct interactions with regulatory proteins and serves as a scaffold for the assembly of a functional pre-initiation complex with RNA polymerase II and the general transcription factors. Also required for transcriptional activation subsequent to the assembly of the pre-initiation complex. Required for transcriptional activation by adenovirus E1A protein. Required for ELK1-dependent transcriptional activation in response to activated Ras signaling. In Mus musculus (Mouse), this protein is Mediator of RNA polymerase II transcription subunit 23 (Med23).